Here is a 169-residue protein sequence, read N- to C-terminus: Small ribosomal subunit protein uS5 (169 aa).

The 64-residue stretch at 14-77 (MKEQVVDIRR…QAAKKNLLLV (64 aa)) folds into the S5 DRBM domain.

The protein belongs to the universal ribosomal protein uS5 family. As to quaternary structure, part of the 30S ribosomal subunit. Contacts proteins S4 and S8.

In terms of biological role, with S4 and S12 plays an important role in translational accuracy. Its function is as follows. Located at the back of the 30S subunit body where it stabilizes the conformation of the head with respect to the body. This is Small ribosomal subunit protein uS5 from Alkaliphilus metalliredigens (strain QYMF).